We begin with the raw amino-acid sequence, 179 residues long: Peptidyl-tRNA hydrolase (179 aa).

Tyr-14 contributes to the tRNA binding site. His-19 functions as the Proton acceptor in the catalytic mechanism. Residues Tyr-60, Asn-62, and Asn-108 each contribute to the tRNA site.

This sequence belongs to the PTH family. As to quaternary structure, monomer.

It localises to the cytoplasm. It carries out the reaction an N-acyl-L-alpha-aminoacyl-tRNA + H2O = an N-acyl-L-amino acid + a tRNA + H(+). Hydrolyzes ribosome-free peptidyl-tRNAs (with 1 or more amino acids incorporated), which drop off the ribosome during protein synthesis, or as a result of ribosome stalling. In terms of biological role, catalyzes the release of premature peptidyl moieties from peptidyl-tRNA molecules trapped in stalled 50S ribosomal subunits, and thus maintains levels of free tRNAs and 50S ribosomes. The polypeptide is Peptidyl-tRNA hydrolase (Mycoplasma mobile (strain ATCC 43663 / 163K / NCTC 11711) (Mesomycoplasma mobile)).